The sequence spans 361 residues: Molybdenum import ATP-binding protein ModC 1 (361 aa).

Positions 1-237 constitute an ABC transporter domain; that stretch reads MPADGIRARF…LDLPTAFHED (237 aa). 35–42 is a binding site for ATP; the sequence is GHSGSGKT. Residues 296–361 form the Mop domain; it reads DSSITNVLPA…AQIKAVALLG (66 aa).

It belongs to the ABC transporter superfamily. Molybdate importer (TC 3.A.1.8) family. In terms of assembly, the complex is composed of two ATP-binding proteins (ModC), two transmembrane proteins (ModB) and a solute-binding protein (ModA).

It localises to the cell inner membrane. The enzyme catalyses molybdate(out) + ATP + H2O = molybdate(in) + ADP + phosphate + H(+). Its function is as follows. Part of the ABC transporter complex ModABC involved in molybdenum import. Responsible for energy coupling to the transport system. This Azotobacter vinelandii protein is Molybdenum import ATP-binding protein ModC 1.